Consider the following 270-residue polypeptide: dTDP-6-deoxy-L-talose 4-dehydrogenase (NAD(+)) (270 aa).

Residues 11–12, 50–51, 72–76, N87, T112, Y135, and K139 contribute to the NAD(+) site; these read YI, DI, and LAWQA. Residues T112 and Y135 each coordinate substrate. The Proton acceptor role is filled by Y135.

It belongs to the NAD(P)-dependent epimerase/dehydratase family.

The enzyme catalyses dTDP-6-deoxy-beta-L-talose + NAD(+) = dTDP-4-dehydro-beta-L-rhamnose + NADH + H(+). It functions in the pathway bacterial outer membrane biogenesis; LPS O-antigen biosynthesis. Its function is as follows. Catalyzes the reduction of dTDP-6-deoxy-L-lyxo-4-hexulose to dTDP-6-deoxy-L-talose. In Aggregatibacter actinomycetemcomitans (Actinobacillus actinomycetemcomitans), this protein is dTDP-6-deoxy-L-talose 4-dehydrogenase (NAD(+)) (tll).